A 153-amino-acid polypeptide reads, in one-letter code: uncharacterized protein (153 aa).

An N-terminal signal peptide occupies residues 1-25 (MKKRQYLKSLYVALLGTLCYLSVNA).

This is an uncharacterized protein from Pasteurella multocida (strain Pm70).